We begin with the raw amino-acid sequence, 443 residues long: MSEMTPREIVSELNKHIIGQDNAKRSVAIALRNRWRRMQLDEELRHEVTPKNILMIGPTGVGKTEIARRLAKLANAPFIKVEATKFTEVGYVGKEVDSIIRDLADSAMKMVRVQAIEKNRYRAEEMAEERILDVLIPPAKNNWGQNEQPQEPSAARQAFRKKLREGQLDDKEIEIDLAAAPMGVEIMSPPGMEEMTSQLQSMFQNLGGQKQKPRKLKIKDAMKLLIEEEAAKLVNPEELKQDAIDAVEQHGIVFIDEIDKICKRGESNGPDVSREGVQRDLLPLVEGCTVSTKHGMVKTDHILFIASGAFQVAKPSDLIPELQGRLPIRVELQALTTDDFERILTEPNASITVQYKALMATEGVTIEFTADGIKRIAQAAWQVNETTENIGARRLHTVLERLVEDISYEASDLNGQSITIDADYVSKHLDALVADEDLSRFIL.

ATP is bound by residues isoleucine 18, 60–65 (GVGKTE), aspartate 256, glutamate 321, and arginine 393.

The protein belongs to the ClpX chaperone family. HslU subfamily. As to quaternary structure, a double ring-shaped homohexamer of HslV is capped on each side by a ring-shaped HslU homohexamer. The assembly of the HslU/HslV complex is dependent on binding of ATP.

The protein localises to the cytoplasm. In terms of biological role, ATPase subunit of a proteasome-like degradation complex; this subunit has chaperone activity. The binding of ATP and its subsequent hydrolysis by HslU are essential for unfolding of protein substrates subsequently hydrolyzed by HslV. HslU recognizes the N-terminal part of its protein substrates and unfolds these before they are guided to HslV for hydrolysis. The polypeptide is ATP-dependent protease ATPase subunit HslU (Enterobacter sp. (strain 638)).